The sequence spans 290 residues: Lysine export transcriptional regulatory protein LysG (290 aa).

An HTH lysR-type domain is found at 1–57; that stretch reads MNPIHLDTLLTIIDEGSFENASLALSISPSAVSQRIKALEKSVGRVLVSRTQPAVAT. Residues 18-37 constitute a DNA-binding region (H-T-H motif); the sequence is FENASLALSISPSAVSQRIK.

Belongs to the LysR transcriptional regulatory family.

Functionally, positively regulates the expression of the exporter LysE. In Corynebacterium efficiens (strain DSM 44549 / YS-314 / AJ 12310 / JCM 11189 / NBRC 100395), this protein is Lysine export transcriptional regulatory protein LysG (lysG).